The primary structure comprises 202 residues: Small ribosomal subunit protein uS4 (202 aa).

An S4 RNA-binding domain is found at serine 94–alanine 157.

The protein belongs to the universal ribosomal protein uS4 family. Part of the 30S ribosomal subunit. Contacts protein S5. The interaction surface between S4 and S5 is involved in control of translational fidelity.

In terms of biological role, one of the primary rRNA binding proteins, it binds directly to 16S rRNA where it nucleates assembly of the body of the 30S subunit. With S5 and S12 plays an important role in translational accuracy. In Malacoplasma penetrans (strain HF-2) (Mycoplasma penetrans), this protein is Small ribosomal subunit protein uS4.